The chain runs to 311 residues: Progestin and adipoQ receptor family member 3 (311 aa).

Residues 1 to 20 (MHQKLLKSAHYIELGSYQYW) are required for interaction with SREBF2. Residues 1–70 (MHQKLLKSAH…KSLFILSNET (70 aa)) lie on the Cytoplasmic side of the membrane. The segment at 41 to 60 (KDNPYITDGYRAYLPSRLCI) is required for interaction with SCAP. The segment at 61–71 (KSLFILSNETV) is golgi targeting. The helical transmembrane segment at 71–91 (VNIWSHLLGFFLFFTLGIYDM) threads the bilayer. At 92–104 (TSVLPSASASRED) the chain is on the lumenal side. A helical membrane pass occupies residues 105–125 (FVICSICLFCFQVCMLCSVGY). At 126-145 (HLFSCHRSEKTCRRWMALDY) the chain is on the cytoplasmic side. The chain crosses the membrane as a helical span at residues 146 to 166 (AGISIGILGCYVSGVFYAFYC). Residues 167-172 (NNYWRQ) are Lumenal-facing. The chain crosses the membrane as a helical span at residues 173–193 (VYLITVLAMILAVFFAQIHPS). Topologically, residues 194–203 (YLTQQWQRLR) are cytoplasmic. A helical transmembrane segment spans residues 204-224 (PIIFCSVSGYGVIPTLHWVWL). At 225-235 (NGGVSAPIVQD) the chain is on the lumenal side. The helical transmembrane segment at 236–256 (FAPRVIVMYVIALLAFLFYIS) threads the bilayer. Residues 257 to 275 (KVPERYFPGQLNYLGSSHQ) are Cytoplasmic-facing. The helical transmembrane segment at 276–296 (IWHVLAVVMLYWWHQSTVYVM) threads the bilayer. Over 297 to 311 (QYRHSKPCPDYVSHL) the chain is Lumenal. The interval 299–303 (RHSKP) is golgi targeting.

Belongs to the ADIPOR family. As to quaternary structure, interacts with SCAP and SREBF2; the interactions are direct, increase in low cholesterol conditions and tether SCAP:SREBP complex to the Golgi apparatus. Interaction with SCAP is mutually exclusive with INSIG1. In hepatocytes, interacts with PPARA and HUWE1; the interactions promote PPARA poylubiquitination and HUWE1-mediated degradation. In macrophages, interacts with PPARG and STUB1; the interactions promote PPARG poylubiquitination and STUB1-mediated degradation.

It localises to the golgi apparatus membrane. Its function is as follows. Golgi-anchored protein which modulates its interactors acitivies by tethering them to the Golgi apparatus. Functions as a spatial regulator of RAF1 kinase by sequestrating it to the Golgi apparatus. Acts as a positive regulator of cholesterol biosynthesis by mediating the anchoring of the SCAP:SREBP complex in the Golgi apparatus, thereby promoting SCAP:SREBF2 complex formation, potentiating SREBF2 and SREBF1 processing and enhancing lipid synthesis. Also regulates PPARA and PPARG functions by mediating their interaction with E3 ubiquitin ligases, such as STUB1 or HUWE1, leading to their polyubiquitination and proteasome-mediated degradation. The protein is Progestin and adipoQ receptor family member 3 of Mus musculus (Mouse).